Here is a 54-residue protein sequence, read N- to C-terminus: UPF0181 protein PM0480 (54 aa).

The protein belongs to the UPF0181 family.

This chain is UPF0181 protein PM0480, found in Pasteurella multocida (strain Pm70).